Consider the following 415-residue polypeptide: Tyrosine--tRNA ligase (415 aa).

An L-tyrosine-binding site is contributed by Tyr34. The 'HIGH' region motif lies at 39–48 (PSADSLHLGN). Positions 162 and 166 each coordinate L-tyrosine. The short motif at 224–228 (KFGKS) is the 'KMSKS' region element. Lys227 serves as a coordination point for ATP. The S4 RNA-binding domain maps to 346-413 (IKIIDLLNLA…KRNYFLIVWN (68 aa)).

Belongs to the class-I aminoacyl-tRNA synthetase family. TyrS type 1 subfamily. Homodimer.

It localises to the cytoplasm. It catalyses the reaction tRNA(Tyr) + L-tyrosine + ATP = L-tyrosyl-tRNA(Tyr) + AMP + diphosphate + H(+). In terms of biological role, catalyzes the attachment of tyrosine to tRNA(Tyr) in a two-step reaction: tyrosine is first activated by ATP to form Tyr-AMP and then transferred to the acceptor end of tRNA(Tyr). The sequence is that of Tyrosine--tRNA ligase from Ureaplasma urealyticum serovar 10 (strain ATCC 33699 / Western).